A 75-amino-acid chain; its full sequence is MYB-like transcription factor ETC3 (75 aa).

Residues 1–20 form a disordered region; sequence MDNHRRTKQPKTNSIVTSSS. The region spanning 34–71 is the Myb-like domain; the sequence is SQEEEDLVSRMHKLVGDRWELIAGRIPGRTAGEIERFW.

In terms of tissue distribution, expressed in leaf epidermal cells, stomate guard cells in leaves, cotyledons and hypocotyls, inflorescences, developing seeds and siliques.

The protein localises to the nucleus. Its function is as follows. MYB-type transcription factor involved in epidermal cell fate specification. Acts as a negative regulator of trichome development, including endoreplication, by mediating lateral inhibition. Promotes the formation of hair developing cells in H position in root epidermis, probably by inhibiting non-hair cell formation. May have pleiotropic effects on flowering development and epidermal cell size through the regulation of endoreduplication. The sequence is that of MYB-like transcription factor ETC3 (ETC3) from Arabidopsis thaliana (Mouse-ear cress).